The following is a 153-amino-acid chain: Aspartate carbamoyltransferase regulatory chain (153 aa).

Zn(2+)-binding residues include C109, C114, C138, and C141.

This sequence belongs to the PyrI family. Contains catalytic and regulatory chains. Zn(2+) serves as cofactor.

Involved in allosteric regulation of aspartate carbamoyltransferase. This is Aspartate carbamoyltransferase regulatory chain from Cenarchaeum symbiosum (strain A).